The sequence spans 225 residues: Cytochrome b6-f complex iron-sulfur subunit, chloroplastic (225 aa).

The transit peptide at 1 to 46 (MASTALSTASNPTQLCRSRASLGKPVKGLGFGRERVPRTATTITCQ) directs the protein to the chloroplast. The chain crosses the membrane as a helical span at residues 69–89 (LLGAISLPTVGMLVPYGAFFI). Residues 112-208 (AEEWLKTHGP…ADVDDGKVLF (97 aa)) form the Rieske domain. [2Fe-2S] cluster contacts are provided by C154, H156, C172, and H175. A disulfide bond links C159 and C174.

Belongs to the Rieske iron-sulfur protein family. In terms of assembly, the 4 large subunits of the cytochrome b6-f complex are cytochrome b6, subunit IV (17 kDa polypeptide, petD), cytochrome f and the Rieske protein, while the 4 small subunits are petG, petL, petM and petN. The complex functions as a dimer. Requires [2Fe-2S] cluster as cofactor.

The protein localises to the plastid. The protein resides in the chloroplast thylakoid membrane. The catalysed reaction is 2 oxidized [plastocyanin] + a plastoquinol + 2 H(+)(in) = 2 reduced [plastocyanin] + a plastoquinone + 4 H(+)(out). In terms of biological role, component of the cytochrome b6-f complex, which mediates electron transfer between photosystem II (PSII) and photosystem I (PSI), cyclic electron flow around PSI, and state transitions. The protein is Cytochrome b6-f complex iron-sulfur subunit, chloroplastic (petC) of Oryza sativa subsp. japonica (Rice).